The following is a 352-amino-acid chain: Peptide chain release factor 1 (352 aa).

Gln-230 carries the post-translational modification N5-methylglutamine.

It belongs to the prokaryotic/mitochondrial release factor family. Methylated by PrmC. Methylation increases the termination efficiency of RF1.

The protein localises to the cytoplasm. Its function is as follows. Peptide chain release factor 1 directs the termination of translation in response to the peptide chain termination codons UAG and UAA. In Exiguobacterium sibiricum (strain DSM 17290 / CCUG 55495 / CIP 109462 / JCM 13490 / 255-15), this protein is Peptide chain release factor 1.